The chain runs to 177 residues: Large ribosomal subunit protein uL6 (177 aa).

Belongs to the universal ribosomal protein uL6 family. In terms of assembly, part of the 50S ribosomal subunit.

In terms of biological role, this protein binds to the 23S rRNA, and is important in its secondary structure. It is located near the subunit interface in the base of the L7/L12 stalk, and near the tRNA binding site of the peptidyltransferase center. The protein is Large ribosomal subunit protein uL6 of Rickettsia prowazekii (strain Madrid E).